Consider the following 93-residue polypeptide: uncharacterized protein (93 aa).

The tract at residues 73–93 is disordered; that stretch reads KWTVSGPVKQDTGKTDPAEKN. Residues 83–93 show a composition bias toward basic and acidic residues; sequence DTGKTDPAEKN.

This is an uncharacterized protein from Rhodobacter capsulatus (Rhodopseudomonas capsulata).